A 118-amino-acid chain; its full sequence is Large ribosomal subunit protein bL20 (118 aa).

This sequence belongs to the bacterial ribosomal protein bL20 family.

In terms of biological role, binds directly to 23S ribosomal RNA and is necessary for the in vitro assembly process of the 50S ribosomal subunit. It is not involved in the protein synthesizing functions of that subunit. This chain is Large ribosomal subunit protein bL20, found in Acidiphilium cryptum (strain JF-5).